Consider the following 397-residue polypeptide: Acetyl-CoA acetyltransferase, cytosolic (397 aa).

Methionine 1 carries the N-acetylmethionine modification. Residue cysteine 92 is the Acyl-thioester intermediate of the active site. Lysine 200 is subject to N6-acetyllysine. CoA-binding residues include arginine 223 and serine 226. N6-acetyllysine occurs at positions 233 and 235. Serine 252 serves as a coordination point for CoA. Cysteine 383 serves as the catalytic Proton donor/acceptor.

This sequence belongs to the thiolase-like superfamily. Thiolase family. In terms of assembly, homotetramer.

The protein resides in the cytoplasm. It is found in the cytosol. The enzyme catalyses 2 acetyl-CoA = acetoacetyl-CoA + CoA. Its pathway is lipid metabolism; fatty acid metabolism. Functionally, involved in the biosynthetic pathway of cholesterol. In Mus musculus (Mouse), this protein is Acetyl-CoA acetyltransferase, cytosolic (Acat2).